The chain runs to 517 residues: Maturase K (517 aa).

It belongs to the intron maturase 2 family. MatK subfamily.

It localises to the plastid. Its subcellular location is the chloroplast. Functionally, usually encoded in the trnK tRNA gene intron. Probably assists in splicing its own and other chloroplast group II introns. The polypeptide is Maturase K (Juncus effusus (Soft rush)).